The sequence spans 278 residues: Gap junction delta-3 protein (278 aa).

Over 1–24 the chain is Cytoplasmic; that stretch reads MGEWAFLGSLLDAVQLQSPLVGRL. Residues 25–45 form a helical membrane-spanning segment; that stretch reads WLVIMLIFRILVLATVGGAVF. Residues 46–76 are Extracellular-facing; that stretch reads EDEQEEFVCNTLQPGCRQTCYDRAFPVSHYR. Residues 77–97 traverse the membrane as a helical segment; it reads FWLFHILLLSAPPVLFVIYSM. Residues 98-136 lie on the Cytoplasmic side of the membrane; it reads HQASKEAGGAQLAPPCARGRAEAPCSPCALRARRARRCY. The chain crosses the membrane as a helical span at residues 137-157; sequence LLSVALRLLAELAFLGGQALL. At 158-188 the chain is on the extracellular side; sequence YGFRVDPHYACAGPPCPHTVDCFVSRPTEKT. Residues 189-209 form a helical membrane-spanning segment; the sequence is VFVVFYFAVGLLSALLSVAEL. Topologically, residues 210-278 are cytoplasmic; the sequence is GHLLWKGRQR…LATVRQDLAI (69 aa). Positions 223–278 are disordered; that stretch reads LPPPPPSPSLPSQRGDPDPFGPPAYAHRSPAGDSEGEGGSGHSKASLATVRQDLAI.

Belongs to the connexin family. Delta-type subfamily. A connexon is composed of a hexamer of connexins.

It is found in the cell membrane. It localises to the cell junction. Its subcellular location is the gap junction. One gap junction consists of a cluster of closely packed pairs of transmembrane channels, the connexons, through which materials of low MW diffuse from one cell to a neighboring cell. The protein is Gap junction delta-3 protein (Gjd3) of Mus musculus (Mouse).